Here is a 229-residue protein sequence, read N- to C-terminus: Aquaporin Z (229 aa).

2 helical membrane-spanning segments follow: residues 8-28 (FLGT…AAGF) and 33-53 (IGFA…AYAI). An NPA 1 motif is present at residues 62-64 (NPA). 3 helical membrane-spanning segments follow: residues 88-108 (VLGA…GAGF), 129-149 (LLAA…VIMG), and 158-178 (GFAP…SIPV). An NPA 2 motif is present at residues 184-186 (NPA). Residues 192–212 (ALFVGGWAVQQLWLFWLAPII) traverse the membrane as a helical segment.

The protein belongs to the MIP/aquaporin (TC 1.A.8) family. As to quaternary structure, homotetramer.

It localises to the cell inner membrane. The enzyme catalyses H2O(in) = H2O(out). Its function is as follows. Channel that permits osmotically driven movement of water in both directions. It is involved in the osmoregulation and in the maintenance of cell turgor during volume expansion in rapidly growing cells. It mediates rapid entry or exit of water in response to abrupt changes in osmolarity. This is Aquaporin Z from Chromobacterium violaceum (strain ATCC 12472 / DSM 30191 / JCM 1249 / CCUG 213 / NBRC 12614 / NCIMB 9131 / NCTC 9757 / MK).